The following is a 333-amino-acid chain: Flap endonuclease 1 (333 aa).

An N-domain region spans residues 1-99 (MGVAIRDILA…ETINERREHR (99 aa)). Positions 28, 81, 153, 155, 174, 176, and 235 each coordinate Mg(2+). The I-domain stretch occupies residues 117–255 (EAYKQASASA…KTALKIVRNG (139 aa)). The interaction with PCNA stretch occupies residues 325–333 (TQKTLDAWF).

It belongs to the XPG/RAD2 endonuclease family. FEN1 subfamily. Interacts with PCNA. PCNA stimulates the nuclease activity without altering cleavage specificity. Requires Mg(2+) as cofactor.

Its function is as follows. Structure-specific nuclease with 5'-flap endonuclease and 5'-3' exonuclease activities involved in DNA replication and repair. During DNA replication, cleaves the 5'-overhanging flap structure that is generated by displacement synthesis when DNA polymerase encounters the 5'-end of a downstream Okazaki fragment. Binds the unpaired 3'-DNA end and kinks the DNA to facilitate 5' cleavage specificity. Cleaves one nucleotide into the double-stranded DNA from the junction in flap DNA, leaving a nick for ligation. Also involved in the base excision repair (BER) pathway. Acts as a genome stabilization factor that prevents flaps from equilibrating into structures that lead to duplications and deletions. Also possesses 5'-3' exonuclease activity on nicked or gapped double-stranded DNA. This is Flap endonuclease 1 from Methanoculleus marisnigri (strain ATCC 35101 / DSM 1498 / JR1).